The chain runs to 598 residues: Thiol:disulfide interchange protein DsbD (598 aa).

The first 21 residues, 1–21 (MRALLTFFVAGLLVLSSPAMA), serve as a signal peptide directing secretion. Residues Cys-130 and Cys-136 are joined by a disulfide bond. Residues 158–180 (TMPTQTASPLDTSTANTSTPQPL) form a disordered region. Polar residues predominate over residues 159-180 (MPTQTASPLDTSTANTSTPQPL). The next 8 helical transmembrane spans lie at 198–220 (LLFL…YPIL), 240–262 (LVYV…SAGL), 274–296 (LIGL…TLQL), 324–346 (AISG…LYVA), 353–375 (TGGV…VAVF), 385–407 (GWMD…FLLE), 414–431 (WSTA…GWLY), and 446–468 (AVGI…YWFA). Cys-212 and Cys-333 form a disulfide bridge. Residues 456–598 (FASAQPALNY…FLEHIQRISN (143 aa)) form the Thioredoxin domain. The cysteines at positions 513 and 516 are disulfide-linked.

This sequence belongs to the thioredoxin family. DsbD subfamily.

It localises to the cell inner membrane. The enzyme catalyses [protein]-dithiol + NAD(+) = [protein]-disulfide + NADH + H(+). The catalysed reaction is [protein]-dithiol + NADP(+) = [protein]-disulfide + NADPH + H(+). Required to facilitate the formation of correct disulfide bonds in some periplasmic proteins and for the assembly of the periplasmic c-type cytochromes. Acts by transferring electrons from cytoplasmic thioredoxin to the periplasm. This transfer involves a cascade of disulfide bond formation and reduction steps. This chain is Thiol:disulfide interchange protein DsbD, found in Vibrio vulnificus (strain YJ016).